The primary structure comprises 398 residues: Lysophosphatidylserine lipase ABHD12 (398 aa).

At 1–74 (MRKRTEPVAL…RKGLWLRLRK (74 aa)) the chain is on the cytoplasmic side. Residues 75–95 (ILFCVLGLYIAIPFLIKLCPG) traverse the membrane as a helical segment. Topologically, residues 96 to 398 (IQAKLIFLNF…LGKSEPEHQH (303 aa)) are extracellular. N-linked (GlcNAc...) asparagine glycosylation is present at Asn-123. The active-site Nucleophile is the Ser-246. Catalysis depends on charge relay system residues Asp-333 and His-372.

The protein belongs to the serine esterase family.

The protein resides in the endoplasmic reticulum membrane. The catalysed reaction is 1-(9Z-octadecenoyl)-sn-glycero-3-phospho-L-serine + H2O = sn-glycero-3-phospho-L-serine + (9Z)-octadecenoate + H(+). The enzyme catalyses 1-(9Z-octadecenoyl)-sn-glycero-3-phospho-(1'-sn-glycerol) + H2O = sn-glycero-3-phospho-(1'-sn-glycerol) + (9Z)-octadecenoate + H(+). It catalyses the reaction 1-(9Z-octadecenoyl)-sn-glycero-3-phospho-(1D-myo-inositol) + H2O = sn-glycero-3-phospho-1D-myo-inositol + (9Z)-octadecenoate + H(+). It carries out the reaction 1-(9Z-octadecenoyl)-sn-glycero-3-phosphoethanolamine + H2O = sn-glycero-3-phosphoethanolamine + (9Z)-octadecenoate + H(+). The catalysed reaction is 1-(9Z-octadecenoyl)-sn-glycero-3-phosphocholine + H2O = 1-(9Z-octadecenoyl)-sn-glycerol + phosphocholine + H(+). The enzyme catalyses 2-(9Z-octadecenoyl)-glycerol + H2O = glycerol + (9Z)-octadecenoate + H(+). It catalyses the reaction 1-hexadecanoyl-sn-glycero-3-phospho-L-serine + H2O = sn-glycero-3-phospho-L-serine + hexadecanoate + H(+). It carries out the reaction 2-(5Z,8Z,11Z,14Z-eicosatetraenoyl)-glycerol + H2O = glycerol + (5Z,8Z,11Z,14Z)-eicosatetraenoate + H(+). The catalysed reaction is Hydrolyzes glycerol monoesters of long-chain fatty acids.. The enzyme catalyses 1-decanoylglycerol + H2O = decanoate + glycerol + H(+). It catalyses the reaction 1-dodecanoylglycerol + H2O = dodecanoate + glycerol + H(+). It carries out the reaction 1-tetradecanoylglycerol + H2O = tetradecanoate + glycerol + H(+). The catalysed reaction is 2-hexadecanoylglycerol + H2O = glycerol + hexadecanoate + H(+). The enzyme catalyses 1-(9Z-octadecenoyl)-glycerol + H2O = glycerol + (9Z)-octadecenoate + H(+). It catalyses the reaction 2-(9Z,12Z-octadecadienoyl)-glycerol + H2O = (9Z,12Z)-octadecadienoate + glycerol + H(+). It carries out the reaction 1-(5Z,8Z,11Z,14Z-eicosatetraenoyl)-glycerol + H2O = glycerol + (5Z,8Z,11Z,14Z)-eicosatetraenoate + H(+). The catalysed reaction is 1-(9Z,12Z-octadecadienoyl)-glycerol + H2O = (9Z,12Z)-octadecadienoate + glycerol + H(+). The enzyme catalyses 1-hexadecanoylglycerol + H2O = glycerol + hexadecanoate + H(+). It catalyses the reaction 1-octadecanoylglycerol + H2O = octadecanoate + glycerol + H(+). It carries out the reaction 1-octadecanoyl-2-(9,10-epoxyoctadecanoyl)-sn-glycero-3-phospho-L-serine + H2O = 9,10-epoxyoctadecanoate + 1-octadecanoyl-sn-glycero-3-phosphoserine + H(+). The catalysed reaction is 1-octadecanoyl-2-(10-hydroxyoctadecanoyl)-sn-glycero-3-phospho-L-serine + H2O = 1-octadecanoyl-sn-glycero-3-phosphoserine + 10-hydroxyoctadecanoate + H(+). The enzyme catalyses 1-hexadecanoyl-2-(10-hydroxyoctadecanoyl)-sn-glycero-3-phospho-L-serine + H2O = 10-hydroxyoctadecanoate + 1-hexadecanoyl-sn-glycero-3-phospho-L-serine + H(+). In terms of biological role, lysophosphatidylserine (LPS) lipase that mediates the hydrolysis of lysophosphatidylserine, a class of signaling lipids that regulates immunological and neurological processes. Represents a major lysophosphatidylserine lipase in the brain, thereby playing a key role in the central nervous system. Also able to hydrolyze oxidized phosphatidylserine; oxidized phosphatidylserine is produced in response to severe inflammatory stress and constitutes a proapoptotic 'eat me' signal. Also has monoacylglycerol (MAG) lipase activity: hydrolyzes 2-arachidonoylglycerol (2-AG), thereby acting as a regulator of endocannabinoid signaling pathways. Has a strong preference for very-long-chain lipid substrates; substrate specificity is likely due to improved catalysis and not improved substrate binding. The polypeptide is Lysophosphatidylserine lipase ABHD12 (Macaca fascicularis (Crab-eating macaque)).